A 380-amino-acid chain; its full sequence is 8-amino-7-oxononanoate synthase (380 aa).

A substrate-binding site is contributed by Arg-26. 104 to 105 (GY) lines the pyridoxal 5'-phosphate pocket. His-129 provides a ligand contact to substrate. Residues Ser-175, 200-203 (DEAH), and 232-235 (TLSK) contribute to the pyridoxal 5'-phosphate site. Position 235 is an N6-(pyridoxal phosphate)lysine (Lys-235). Substrate is bound at residue Thr-345.

This sequence belongs to the class-II pyridoxal-phosphate-dependent aminotransferase family. BioF subfamily. Homodimer. It depends on pyridoxal 5'-phosphate as a cofactor.

The enzyme catalyses 6-carboxyhexanoyl-[ACP] + L-alanine + H(+) = (8S)-8-amino-7-oxononanoate + holo-[ACP] + CO2. It participates in cofactor biosynthesis; biotin biosynthesis. Its function is as follows. Catalyzes the decarboxylative condensation of pimeloyl-[acyl-carrier protein] and L-alanine to produce 8-amino-7-oxononanoate (AON), [acyl-carrier protein], and carbon dioxide. The protein is 8-amino-7-oxononanoate synthase of Mycolicibacterium gilvum (strain PYR-GCK) (Mycobacterium gilvum (strain PYR-GCK)).